The primary structure comprises 908 residues: MFGNLLTKIFGSRNDRTLKQLGKVVVKINALEAEYEKLSDEELKAKTAEFKARLEKGESLNELMAEAFATVREASKRVFEMRHFDVQLMGGMVLDSNRIAEMRTGEGKTLTATLPAYLNALTGKGVHVITVNDYLARRDAENNRPLFEFLGMSVGVNVAGLSHADKKAAYDADITYGTNNEFGFDYLRDNMAFSPNDRVQRPLHYALIDEVDSILIDEARTPLIISGAAEDSSELYMRVNKLIPSLIRQEKEDTEEFVGEGDYSIDEKARQVHMTERGQEKVEQLLTEAGLLAEGDSLYSAANISLLHHVNAALRAHTLFEKDVDYVVQNNEVVIVDEHTGRTMPGRRWSEGLHQAVEAKEGVRIQNENQTLASITFQNYFRLYEKLAGMTGTADTEAFEFQHIYGLDTVVVPTNRPMVRKDMPDLVYLTAREKYQAIIADIKDCRERGQPVLVGTVSIEQSELLSRLLNQDKIPHQVLNAKFHEKEAEIVAQAGRSGAVTVATNMAGRGTDIVLGGNWKSEIEALENPSEADIARIRADWEVRHNAVVEAGGLHILGTERHESRRIDNQLRGRSGRQGDPGSSRFYLSMEDNLMRIFASERVANMMKKLGMEEGEAIEHPWVTRAIENAQRKVEARNFDIRKQLLEFDDVANDQRQVVYAQRNELMDAESIEETIKNIQADVVDGVISQYIPPQSVEELWDVPGLEDRLAKEFGLQLPVQEWLDKEDDLHEETLRERIVDTWRQAYEAKEQMVGTPVLRQFEKAVMLQTLDGLWKEHLAAMDHLRQGIHLRGYAQKNPKQEYKRESFELFQQMLETLKHDVIAILSKVQVQAQSDVDEMEARRREEEARIQREYQHAEAESMASDNSELADMASHVPVVRDGEKVGRNDPCPCGSGKKYKQCHGKLT.

ATP contacts are provided by residues Q87, 105–109 (GEGKT), and D512. Residues 882–908 (DGEKVGRNDPCPCGSGKKYKQCHGKLT) are disordered. Residues C892, C894, C903, and H904 each contribute to the Zn(2+) site. Over residues 898-908 (KKYKQCHGKLT) the composition is skewed to basic residues.

Belongs to the SecA family. As to quaternary structure, monomer and homodimer. Part of the essential Sec protein translocation apparatus which comprises SecA, SecYEG and auxiliary proteins SecDF-YajC and YidC. Zn(2+) is required as a cofactor.

It localises to the cell inner membrane. The protein localises to the cytoplasm. It catalyses the reaction ATP + H2O + cellular proteinSide 1 = ADP + phosphate + cellular proteinSide 2.. Its function is as follows. Part of the Sec protein translocase complex. Interacts with the SecYEG preprotein conducting channel. Has a central role in coupling the hydrolysis of ATP to the transfer of proteins into and across the cell membrane, serving both as a receptor for the preprotein-SecB complex and as an ATP-driven molecular motor driving the stepwise translocation of polypeptide chains across the membrane. The chain is Protein translocase subunit SecA from Shewanella amazonensis (strain ATCC BAA-1098 / SB2B).